The chain runs to 313 residues: Acetaldehyde dehydrogenase (313 aa).

Position 15-18 (15-18 (SGNI)) interacts with NAD(+). C133 functions as the Acyl-thioester intermediate in the catalytic mechanism. NAD(+) is bound by residues 164–172 (SAGPGTRAN) and N289.

It belongs to the acetaldehyde dehydrogenase family.

It carries out the reaction acetaldehyde + NAD(+) + CoA = acetyl-CoA + NADH + H(+). In Rhizobium rhizogenes (strain K84 / ATCC BAA-868) (Agrobacterium radiobacter), this protein is Acetaldehyde dehydrogenase.